A 1488-amino-acid polypeptide reads, in one-letter code: Neuropathy target esterase sws (1488 aa).

Residues 1–34 are Lumenal-facing; the sequence is MDVLELLRASVNGCYNTLFSDAWSQYVSKQIATT. Residues 35–55 form a helical membrane-spanning segment; sequence TYWYGALLAIGALFIAWFLYF. Over 56 to 1488 the chain is Cytoplasmic; sequence KRLASLRLRD…ENVTEADTKN (1433 aa). 175 to 302 lines the a nucleoside 3',5'-cyclic phosphate pocket; it reads IFGHFEKPIF…IRVIQVIMIR (128 aa). Disordered stretches follow at residues 339-379 and 402-440; these read PGPV…DPNP and QQQQ…ATIT. 2 stretches are compositionally biased toward low complexity: residues 344–356 and 402–413; these read SQAS…MASR and QQQQSSGVSVGG. Residues 415–424 show a composition bias toward polar residues; that stretch reads HRSSGACTPT. A nucleoside 3',5'-cyclic phosphate-binding positions include 458–587 and 576–703; these read ELGL…VVRR and IVLD…LSHR. The PNPLA domain maps to 929–1095; the sequence is LVLGGGGARG…VNNLPGHLWR (167 aa). Residues 933–938 carry the GXGXXG motif; that stretch reads GGGARG. The short motif at 960–964 is the GXSXG element; sequence GVSIG. S962 acts as the Nucleophile in catalysis. D1082 functions as the Proton acceptor in the catalytic mechanism. The short motif at 1082–1084 is the DGA/G element; it reads DGG. Residue S1176 is modified to Phosphoserine. 2 disordered regions span residues 1348–1376 and 1398–1488; these read RKVD…QGNL and EHKR…DTKN. Residues 1399 to 1410 show a composition bias toward basic residues; sequence HKRRQKSKHKRD. Residues 1440 to 1452 are compositionally biased toward basic and acidic residues; that stretch reads IDAKLDQLRKLQQ. Acidic residues predominate over residues 1456–1470; sequence QGNESEQEQEQEQEQ.

It belongs to the NTE family. In terms of assembly, interacts with Pka-C3; interaction inhibits the catalytic function of Pka-C3 and the esterase activity of sws.

The protein localises to the endoplasmic reticulum membrane. It carries out the reaction a 1-acyl-sn-glycero-3-phosphocholine + H2O = sn-glycerol 3-phosphocholine + a fatty acid + H(+). In terms of biological role, phospholipase B that deacylates intracellular phosphatidylcholine (PtdCho), generating glycerophosphocholine (GroPtdCho). This deacylation occurs at both sn-2 and sn-1 positions of PtdCho. Its specific chemical modification by certain organophosphorus (OP) compounds leads to distal axonopathy. Plays a role in the signaling mechanism between neurons and glia that regulates glia wrapping during development of the adult brain. Essential for membrane lipid homeostasis and cell survival in both neurons and glia of the adult brain. The protein is Neuropathy target esterase sws of Drosophila mojavensis (Fruit fly).